The primary structure comprises 239 residues: 7-cyano-7-deazaguanine synthase (239 aa).

13 to 23 contacts ATP; it reads FSGGQDSTTCL. The Zn(2+) site is built by cysteine 192, cysteine 201, cysteine 204, and cysteine 207.

The protein belongs to the QueC family. Requires Zn(2+) as cofactor.

The enzyme catalyses 7-carboxy-7-deazaguanine + NH4(+) + ATP = 7-cyano-7-deazaguanine + ADP + phosphate + H2O + H(+). It participates in purine metabolism; 7-cyano-7-deazaguanine biosynthesis. Functionally, catalyzes the ATP-dependent conversion of 7-carboxy-7-deazaguanine (CDG) to 7-cyano-7-deazaguanine (preQ(0)). This is 7-cyano-7-deazaguanine synthase from Shewanella sp. (strain MR-4).